Reading from the N-terminus, the 107-residue chain is Ferredoxin 1 (107 aa).

4Fe-4S ferredoxin-type domains are found at residues 2–30 (TFVVTDNCIKCKYTDCVEVCPVDCFYEGP) and 31–60 (NFLVIHPDECIDCALCEPECPAQAIFSEDE). Positions 9 and 17 each coordinate [3Fe-4S] cluster. Residues cysteine 21, cysteine 40, cysteine 43, and cysteine 46 each contribute to the [4Fe-4S] cluster site. Position 50 (cysteine 50) interacts with [3Fe-4S] cluster.

[4Fe-4S] cluster is required as a cofactor. Requires [3Fe-4S] cluster as cofactor.

In terms of biological role, ferredoxins are iron-sulfur proteins that transfer electrons in a wide variety of metabolic reactions. This is Ferredoxin 1 (fdxA) from Pseudomonas aeruginosa (strain ATCC 15692 / DSM 22644 / CIP 104116 / JCM 14847 / LMG 12228 / 1C / PRS 101 / PAO1).